The sequence spans 354 residues: Histidinol-phosphate aminotransferase (354 aa).

N6-(pyridoxal phosphate)lysine is present on K222.

The protein belongs to the class-II pyridoxal-phosphate-dependent aminotransferase family. Histidinol-phosphate aminotransferase subfamily. As to quaternary structure, homodimer. Pyridoxal 5'-phosphate serves as cofactor.

The catalysed reaction is L-histidinol phosphate + 2-oxoglutarate = 3-(imidazol-4-yl)-2-oxopropyl phosphate + L-glutamate. The protein operates within amino-acid biosynthesis; L-histidine biosynthesis; L-histidine from 5-phospho-alpha-D-ribose 1-diphosphate: step 7/9. The polypeptide is Histidinol-phosphate aminotransferase (Leuconostoc citreum (strain KM20)).